Reading from the N-terminus, the 102-residue chain is MAKQKIRIRLKAFDHTILDQSSEKIVETAKSTGAKVAGPVPLPTEKDVVTILRAPHKYKDSREQFEIRTHKRLIDIISPSPKTVDALMRLDLPAGVDIEIKL.

This sequence belongs to the universal ribosomal protein uS10 family. In terms of assembly, part of the 30S ribosomal subunit.

Functionally, involved in the binding of tRNA to the ribosomes. This Clostridium kluyveri (strain NBRC 12016) protein is Small ribosomal subunit protein uS10.